A 239-amino-acid chain; its full sequence is Ribonuclease P protein component 3 (239 aa).

This sequence belongs to the eukaryotic/archaeal RNase P protein component 3 family. Consists of a catalytic RNA component and at least 4-5 protein subunits.

The protein resides in the cytoplasm. It catalyses the reaction Endonucleolytic cleavage of RNA, removing 5'-extranucleotides from tRNA precursor.. Functionally, part of ribonuclease P, a protein complex that generates mature tRNA molecules by cleaving their 5'-ends. The sequence is that of Ribonuclease P protein component 3 from Methanosarcina barkeri (strain Fusaro / DSM 804).